A 514-amino-acid chain; its full sequence is Na(+)/H(+) antiporter NhaB (514 aa).

The next 12 membrane-spanning stretches (helical) occupy residues 23 to 43 (LALL…PFIA), 52 to 72 (IFTL…LLAI), 97 to 117 (LLLM…LFIF), 120 to 140 (LLLS…AAAF), 144 to 164 (FLDA…FYGI), 202 to 222 (LMMH…VGEP), 238 to 258 (FFLR…LTCL), 303 to 323 (ALIG…VGLI), 353 to 373 (FTAL…QSLF), 391 to 411 (LFYL…VGTI), 447 to 467 (ATPN…APLI), and 475 to 495 (VWMA…CVEF).

This sequence belongs to the NhaB Na(+)/H(+) (TC 2.A.34) antiporter family.

The protein localises to the cell inner membrane. It carries out the reaction 2 Na(+)(in) + 3 H(+)(out) = 2 Na(+)(out) + 3 H(+)(in). In terms of biological role, na(+)/H(+) antiporter that extrudes sodium in exchange for external protons. This is Na(+)/H(+) antiporter NhaB from Escherichia fergusonii (strain ATCC 35469 / DSM 13698 / CCUG 18766 / IAM 14443 / JCM 21226 / LMG 7866 / NBRC 102419 / NCTC 12128 / CDC 0568-73).